A 176-amino-acid polypeptide reads, in one-letter code: Large ribosomal subunit protein eL20 (176 aa).

Residue Lys-11 forms a Glycyl lysine isopeptide (Lys-Gly) (interchain with G-Cter in SUMO2) linkage. The residue at position 63 (Tyr-63) is a Phosphotyrosine. Position 71 is a phosphoserine (Ser-71). Lys-76 bears the N6-succinyllysine mark. Ser-123 is modified (phosphoserine). Glycyl lysine isopeptide (Lys-Gly) (interchain with G-Cter in SUMO2) cross-links involve residues Lys-128 and Lys-170.

The protein belongs to the eukaryotic ribosomal protein eL20 family. Component of the large ribosomal subunit. Binds IPO9 with high affinity.

Its subcellular location is the cytoplasm. Its function is as follows. Component of the large ribosomal subunit. The ribosome is a large ribonucleoprotein complex responsible for the synthesis of proteins in the cell. This chain is Large ribosomal subunit protein eL20 (RPL18A), found in Oryctolagus cuniculus (Rabbit).